Reading from the N-terminus, the 281-residue chain is Pantothenate synthetase (281 aa).

Position 30 to 37 (30 to 37) interacts with ATP; it reads MGALHAGH. H37 acts as the Proton donor in catalysis. Residue Q64 participates in (R)-pantoate binding. Beta-alanine is bound at residue Q64. Residue 150–153 coordinates ATP; that stretch reads GKKD. Q156 serves as a coordination point for (R)-pantoate. Residues V179 and 187-190 contribute to the ATP site; that span reads YSSR.

The protein belongs to the pantothenate synthetase family. Homodimer.

It is found in the cytoplasm. The enzyme catalyses (R)-pantoate + beta-alanine + ATP = (R)-pantothenate + AMP + diphosphate + H(+). It participates in cofactor biosynthesis; (R)-pantothenate biosynthesis; (R)-pantothenate from (R)-pantoate and beta-alanine: step 1/1. In terms of biological role, catalyzes the condensation of pantoate with beta-alanine in an ATP-dependent reaction via a pantoyl-adenylate intermediate. The sequence is that of Pantothenate synthetase from Akkermansia muciniphila (strain ATCC BAA-835 / DSM 22959 / JCM 33894 / BCRC 81048 / CCUG 64013 / CIP 107961 / Muc).